An 834-amino-acid chain; its full sequence is Protein Jade-1 (834 aa).

The segment at 1-46 is disordered; that stretch reads MKRGRLPSSSEDSDDNGSLSTTWSQHSRSQHGRSSTCSRPEDRKPS. The segment covering 24–35 has biased composition (low complexity); the sequence is SQHSRSQHGRSS. Residues 61–81 are interaction with KAT7/HBO1 and histones; it reads DSYQLNPDDYYVLADPWRQEW. An interaction with histones region spans residues 81 to 189; the sequence is WEKGVQVPVS…EQRCYDNMNH (109 aa). Position 90 is a phosphoserine (Ser-90). Thr-93 is subject to Phosphothreonine. Lys-115 is covalently cross-linked (Glycyl lysine isopeptide (Lys-Gly) (interchain with G-Cter in SUMO2)). A PHD-type 1 zinc finger spans residues 204–254; the sequence is DVVCDVCQSPDGEDGNEMVFCDKCNICVHQACYGILKVPEGSWLCRTCALG. The segment at 256-290 adopts a C2HC pre-PHD-type zinc-finger fold; that stretch reads QPKCLLCPKKGGAMKPTRSGTKWVHVSCALWIPEV. Residues 314-370 form a PHD-type 2 zinc finger; the sequence is LVCSLCNEKFGASIQCSVKNCRTAFHVTCAFDRGLEMKTILAENDEVKFKSYCPKHS. Residues 367–409 form a disordered region; the sequence is PKHSSHRKPEEGLGEGAAQENGAPESSPQSPLEPYGSLEPNRE. A Glycyl lysine isopeptide (Lys-Gly) (interchain with G-Cter in SUMO2) cross-link involves residue Lys-573. Disordered stretches follow at residues 589–621 and 676–716; these read HPLKKSHKRDAVQNSSGTEGKTSHKQPGLCGRR and DKSF…GTRK. At Ser-603 the chain carries Phosphoserine. An N6-acetyllysine modification is found at Lys-609. Phosphoserine is present on residues Ser-704 and Ser-735. The segment at 738-819 is disordered; that stretch reads KSWGGFRIPK…EKKCIHASST (82 aa). 2 stretches are compositionally biased toward basic and acidic residues: residues 747–768 and 777–790; these read KKGERQQQGEAHDGACHQHSDC and PAKERAKSRLRADS.

It belongs to the JADE family. In terms of assembly, component of the HBO1 complex composed at least of ING4 or ING5, KAT7/HBO1, MEAF6, and one of JADE1, JADE2 and JADE3. Interacts with NPHP4. As to expression, highly expressed in kidney. Also present in liver (at protein level).

The protein localises to the nucleus. It is found in the chromosome. It localises to the cytoplasm. Its subcellular location is the cytoskeleton. The protein resides in the cilium basal body. Scaffold subunit of some HBO1 complexes, which have a histone H4 acetyltransferase activity. Plays a key role in HBO1 complex by directing KAT7/HBO1 specificity towards histone H4 acetylation (H4K5ac, H4K8ac and H4K12ac), regulating DNA replication initiation, regulating DNA replication initiation. May also promote acetylation of nucleosomal histone H4 by KAT5. Promotes apoptosis. May act as a renal tumor suppressor. Negatively regulates canonical Wnt signaling; at least in part, cooperates with NPHP4 in this function. This Mus musculus (Mouse) protein is Protein Jade-1 (Jade1).